A 404-amino-acid polypeptide reads, in one-letter code: Sulfate adenylyltransferase (404 aa).

Belongs to the sulfate adenylyltransferase family.

It catalyses the reaction sulfate + ATP + H(+) = adenosine 5'-phosphosulfate + diphosphate. Its pathway is sulfur metabolism; hydrogen sulfide biosynthesis; sulfite from sulfate: step 1/3. In Chlorobium chlorochromatii (strain CaD3), this protein is Sulfate adenylyltransferase.